We begin with the raw amino-acid sequence, 186 residues long: Peptidyl-tRNA hydrolase (186 aa).

A tRNA-binding site is contributed by Y14. The active-site Proton acceptor is H19. Y64, N66, and N112 together coordinate tRNA.

Belongs to the PTH family. Monomer.

It localises to the cytoplasm. The catalysed reaction is an N-acyl-L-alpha-aminoacyl-tRNA + H2O = an N-acyl-L-amino acid + a tRNA + H(+). Hydrolyzes ribosome-free peptidyl-tRNAs (with 1 or more amino acids incorporated), which drop off the ribosome during protein synthesis, or as a result of ribosome stalling. In terms of biological role, catalyzes the release of premature peptidyl moieties from peptidyl-tRNA molecules trapped in stalled 50S ribosomal subunits, and thus maintains levels of free tRNAs and 50S ribosomes. This Geobacillus kaustophilus (strain HTA426) protein is Peptidyl-tRNA hydrolase.